A 344-amino-acid chain; its full sequence is N-acetyl-gamma-glutamyl-phosphate reductase (344 aa).

Residue Cys-148 is part of the active site.

This sequence belongs to the NAGSA dehydrogenase family. Type 1 subfamily.

The protein localises to the cytoplasm. The catalysed reaction is N-acetyl-L-glutamate 5-semialdehyde + phosphate + NADP(+) = N-acetyl-L-glutamyl 5-phosphate + NADPH + H(+). The protein operates within amino-acid biosynthesis; L-arginine biosynthesis; N(2)-acetyl-L-ornithine from L-glutamate: step 3/4. In terms of biological role, catalyzes the NADPH-dependent reduction of N-acetyl-5-glutamyl phosphate to yield N-acetyl-L-glutamate 5-semialdehyde. This is N-acetyl-gamma-glutamyl-phosphate reductase from Geobacillus kaustophilus (strain HTA426).